Consider the following 71-residue polypeptide: Large ribosomal subunit protein bL31 (71 aa).

Cys16, Cys18, Cys37, and Cys40 together coordinate Zn(2+).

Belongs to the bacterial ribosomal protein bL31 family. Type A subfamily. Part of the 50S ribosomal subunit. Zn(2+) is required as a cofactor.

Functionally, binds the 23S rRNA. The sequence is that of Large ribosomal subunit protein bL31 from Nitratidesulfovibrio vulgaris (strain ATCC 29579 / DSM 644 / CCUG 34227 / NCIMB 8303 / VKM B-1760 / Hildenborough) (Desulfovibrio vulgaris).